The following is a 106-amino-acid chain: uncharacterized protein (106 aa).

Topologically, residues 1 to 6 are cytoplasmic; the sequence is MYQTSP. A helical membrane pass occupies residues 7-27; sequence LSLFYFQVLVPKFLECFLCFP. The Extracellular segment spans residues 28–32; that stretch reads YHKIS. A helical transmembrane segment spans residues 33–53; the sequence is LVALLSFFYCQLQTNMIILLS. At 54 to 73 the chain is on the cytoplasmic side; it reads QIKRFLYRQIMIALKIKAKK. The chain crosses the membrane as a helical span at residues 74-94; the sequence is FWFIFKYFNVSCDARLFNELF. The Extracellular portion of the chain corresponds to 95–106; it reads YIFQTYVSVDSK.

The protein localises to the membrane. This is an uncharacterized protein from Saccharomyces cerevisiae (strain ATCC 204508 / S288c) (Baker's yeast).